A 98-amino-acid chain; its full sequence is UPF0235 protein CCNA_03737 (98 aa).

This sequence belongs to the UPF0235 family.

This Caulobacter vibrioides (strain NA1000 / CB15N) (Caulobacter crescentus) protein is UPF0235 protein CCNA_03737.